The following is a 519-amino-acid chain: 2,3-bisphosphoglycerate-independent phosphoglycerate mutase (519 aa).

Residues Asp18 and Ser68 each contribute to the Mn(2+) site. Catalysis depends on Ser68, which acts as the Phosphoserine intermediate. Substrate contacts are provided by residues His129, 159 to 160, Arg191, Arg197, 267 to 270, and Lys341; these read RD and RADR. Asp408, His412, Asp449, His450, and His468 together coordinate Mn(2+).

This sequence belongs to the BPG-independent phosphoglycerate mutase family. Monomer. Mn(2+) is required as a cofactor.

The enzyme catalyses (2R)-2-phosphoglycerate = (2R)-3-phosphoglycerate. Its pathway is carbohydrate degradation; glycolysis; pyruvate from D-glyceraldehyde 3-phosphate: step 3/5. Catalyzes the interconversion of 2-phosphoglycerate and 3-phosphoglycerate. The chain is 2,3-bisphosphoglycerate-independent phosphoglycerate mutase from Coxiella burnetii (strain Dugway 5J108-111).